The chain runs to 37 residues: Myo-inositol-binding protein (37 aa).

The protein belongs to the bacterial solute-binding protein 2 family.

Its subcellular location is the periplasm. The chain is Myo-inositol-binding protein from Pseudomonas sp.